A 142-amino-acid polypeptide reads, in one-letter code: Hemoglobin subunit alpha (142 aa).

A Globin domain is found at 2-142 (VLSDADKTHV…VATVLTSKYR (141 aa)). The residue at position 4 (Ser-4) is a Phosphoserine. Lys-8 is subject to N6-succinyllysine. Thr-9 bears the Phosphothreonine mark. An N6-succinyllysine modification is found at Lys-12. Position 17 is an N6-acetyllysine; alternate (Lys-17). Lys-17 is modified (N6-succinyllysine; alternate). At Tyr-25 the chain carries Phosphotyrosine. At Ser-36 the chain carries Phosphoserine. Position 41 is an N6-succinyllysine (Lys-41). Ser-50 is subject to Phosphoserine. His-59 provides a ligand contact to O2. A heme b-binding site is contributed by His-88. Position 103 is a phosphoserine (Ser-103). Thr-109 is subject to Phosphothreonine. 2 positions are modified to phosphoserine: Ser-125 and Ser-132. 2 positions are modified to phosphothreonine: Thr-135 and Thr-138. The residue at position 139 (Ser-139) is a Phosphoserine.

It belongs to the globin family. In terms of assembly, heterotetramer of two alpha chains and two beta chains. As to expression, red blood cells.

In terms of biological role, involved in oxygen transport from the lung to the various peripheral tissues. Functionally, hemopressin acts as an antagonist peptide of the cannabinoid receptor CNR1. Hemopressin-binding efficiently blocks cannabinoid receptor CNR1 and subsequent signaling. The protein is Hemoglobin subunit alpha (HBA) of Dasyurus viverrinus (Eastern quoll).